We begin with the raw amino-acid sequence, 156 residues long: MPRKGHVQKREILPDPMYNSKLVTSLIDHLMIDGKRGTATKILYAAFDEIKNETGNDPVEVFQQAMENVMPVLEVKARRVGGSNYQVPIEVRPDRRTTLGLRWIVQYARLRGEHTMVERLAREIIDASNNTGASVKKREDTHRMAEANRAFAHYRW.

The protein belongs to the universal ribosomal protein uS7 family. In terms of assembly, part of the 30S ribosomal subunit. Contacts proteins S9 and S11.

One of the primary rRNA binding proteins, it binds directly to 16S rRNA where it nucleates assembly of the head domain of the 30S subunit. Is located at the subunit interface close to the decoding center, probably blocks exit of the E-site tRNA. This is Small ribosomal subunit protein uS7 from Limosilactobacillus reuteri (strain DSM 20016) (Lactobacillus reuteri).